Here is a 199-residue protein sequence, read N- to C-terminus: CASP-like protein 4C1 (199 aa).

Residues 1-35 (MESGSVANDSGPLNSTPDVHLYGKTAAMKQRRSNT) lie on the Cytoplasmic side of the membrane. A helical membrane pass occupies residues 36-56 (MLFVFRLLTFSFSLAAVLVMG). At 57–80 (TNKQKIRSAPQYLEVAWHDFDPFR) the chain is on the extracellular side. The chain crosses the membrane as a helical span at residues 81 to 101 (YVFAVNAIICVYSFVETWLAV). Residues 102–124 (YTLSRGTLLLPETFQVWFDYGHD) are Cytoplasmic-facing. A helical membrane pass occupies residues 125-145 (QGFACLLFSANSVGIAMAQLL). The Extracellular segment spans residues 146–169 (QSGSTLIQGQYYCSDAGAYCTQAR). The helical transmembrane segment at 170–190 (VSIAMGFGAFLFLALSSFLTG) threads the bilayer. Over 191–199 (LRVARWYLP) the chain is Cytoplasmic.

Belongs to the Casparian strip membrane proteins (CASP) family. Homodimer and heterodimers.

It is found in the cell membrane. In Physcomitrium patens (Spreading-leaved earth moss), this protein is CASP-like protein 4C1.